Reading from the N-terminus, the 251-residue chain is HTH-type transcriptional regulator UlaR (251 aa).

The HTH deoR-type domain occupies 3 to 58; the sequence is EAQRHQILLDMLAQLGFVTVENVIERLGISPATARRDINKLDESGKLKKVRNGAEA. A DNA-binding region (H-T-H motif) is located at residues 20–39; sequence VTVENVIERLGISPATARRD.

It localises to the cytoplasm. In terms of biological role, represses ulaG and the ulaABCDEF operon. This is HTH-type transcriptional regulator UlaR from Salmonella agona (strain SL483).